The primary structure comprises 511 residues: MEEHIQIFDTTLRDGEQTPGVNFTFDERLKIAKQLEKWGVDVLEAGFPASSTGSFKSVEAIAKTLTTTAVCGLARCKKSDIDAVYEATKEAVKPQVHVFIATSPIHLEHKLKMTQDEVLTSIKEHVSYAKQFFEVVQFSPEDATRTEIPFLIECVQTAINAGATIINIPDTVGFSYPTEYGEIFKQLTQAVKSNSKIIFSAHCHDDLGMAVANSLAAIEGGARRIEGTVNGIGERAGNASLEEVALALYVRKDHYGLESQINLEETKKTSDLISRYAGIRVPRNKAIVGQNAFSHESGIHQDGVLKHRETYEIMTPQLVGVNTTELPLGKLSGKHAFAEKLKALGYEIKLEDQVTLFKQFKEIADKKKNVSDRDIHAIIHGSEHEHNAIFQLDNLQLQYVSKGLQSAVVVIKERNGQVKQDSSIGTGSIVAIYNAVDRIFKKDAELIDYRIDSVTEGTDAQAEVHVRIIINHIEVTGIGIDHDILKASCKAYIDAHAKYISEYELKEGIRT.

The Pyruvate carboxyltransferase domain maps to 5-267; that stretch reads IQIFDTTLRD…ESQINLEETK (263 aa). D14, H202, H204, and N238 together coordinate Mn(2+). The interval 391-511 is regulatory domain; that stretch reads QLDNLQLQYV…EYELKEGIRT (121 aa).

It belongs to the alpha-IPM synthase/homocitrate synthase family. LeuA type 1 subfamily. In terms of assembly, homodimer. Requires Mn(2+) as cofactor.

It localises to the cytoplasm. The catalysed reaction is 3-methyl-2-oxobutanoate + acetyl-CoA + H2O = (2S)-2-isopropylmalate + CoA + H(+). It participates in amino-acid biosynthesis; L-leucine biosynthesis; L-leucine from 3-methyl-2-oxobutanoate: step 1/4. Functionally, catalyzes the condensation of the acetyl group of acetyl-CoA with 3-methyl-2-oxobutanoate (2-ketoisovalerate) to form 3-carboxy-3-hydroxy-4-methylpentanoate (2-isopropylmalate). The chain is 2-isopropylmalate synthase from Staphylococcus epidermidis (strain ATCC 35984 / DSM 28319 / BCRC 17069 / CCUG 31568 / BM 3577 / RP62A).